Here is a 449-residue protein sequence, read N- to C-terminus: Type 3 secretion system ATPase (449 aa).

ATP is bound at residue 178–183 (GCGKTT).

It belongs to the ATPase alpha/beta chains family. T3SS ATPase subfamily. As to quaternary structure, the core secretion machinery of the T3SS is composed of approximately 20 different proteins, including cytoplasmic components, a base, an export apparatus and a needle. This subunit is part of the cytosolic complex. Forms homododecamers.

Its subcellular location is the cytoplasm. The catalysed reaction is ATP + H2O + cellular proteinSide 1 = ADP + phosphate + cellular proteinSide 2.. Its function is as follows. ATPase component of the type III secretion system (T3SS), also called injectisome, which is used to inject bacterial effector proteins into eukaryotic host cells. Acts as a molecular motor to provide the energy that is required for the export of proteins. Required for type III secretion apparatus (T3SA) formation, proper protein secretion, host cell invasion and virulence. May play a critical role in T3SS substrate recognition, disassembly of the effector/chaperone complex and unfolding of the effector in an ATP-dependent manner prior to secretion. This chain is Type 3 secretion system ATPase, found in Pseudomonas syringae pv. tomato (strain ATCC BAA-871 / DC3000).